Reading from the N-terminus, the 139-residue chain is Transcription antitermination protein NusB (139 aa).

It belongs to the NusB family.

Involved in transcription antitermination. Required for transcription of ribosomal RNA (rRNA) genes. Binds specifically to the boxA antiterminator sequence of the ribosomal RNA (rrn) operons. In Klebsiella pneumoniae (strain 342), this protein is Transcription antitermination protein NusB.